The sequence spans 736 residues: MLSLGSGGAKSSKPSFVSYVTPEEIKLEKDPQKKEKHPDLLPGEVVFCSANPILKYTQDDLSQRGVFGTLLCTNFRVAFISDDAPQEEMSKTFKNKLYGENDIPLMCVDHIYGVYDEKRKLITGGLVKNKCPSKMIIHCKDLRVFQFCLTFSKEEDAKRIFQGIAHHCLEEKSLKCVFAFSYLRSTNPEMLRKREAIMFDSPEDWTQEMKRTKAQCRLVTENENFELSQRLPQYFVIPSALGDLFNYQGKGLPIWCWSHHSGCALFKASFPSMTQEDGDFQSHLDTMITAVARNYLYSVKTEDLSESLPTLQDIQQSYNKFKQYFLIDNTTDFWLSDVKWFSSLESSGWLDIIRQCLQKAVEVVECLEKDNTNVLITEEEGTDLCCVISSLAQIMLDPYYRTLMGFQSLVQKEWVAGCHAFLDRCNHLHQKDKECHSPVFLLFLECVWQLVQQHSPAFQFSETYLTVLSDSVHVPIFSTFLFNSAHHRESVMKAESPIAQSRPLSCPTVWDWSVQFDSKAQNFFFNPLYSEKVKHERTVRRPHKHKHQRQLSLPSSAFKTPTKKGFFKDETDSLKKMLRVKRISRWMGSPDSPVVASREFYESWQQRPLDYHGLLLPSLDGPSVRIWMQRYLRWIPEVHIMGGGSVAIMTKLMELLSQVEDLKRVLEQRDPSLATQPDHPPPLHHRLPSFGSSGRLSSSFPFTYSRNRSFKPIIPTGLMQSLMVADNLANQEDETS.

The Myotubularin phosphatase domain maps to 182-558 (YLRSTNPEML…RQLSLPSSAF (377 aa)). A disordered region spans residues 672–691 (SLATQPDHPPPLHHRLPSFG).

The protein belongs to the protein-tyrosine phosphatase family. Non-receptor class myotubularin subfamily. Heterodimer with lipid phosphatase mtm1. In skeletal muscles, the interaction stabilizes both mtmr12 and mtm1 protein levels.

The protein resides in the cytoplasm. It localises to the sarcoplasmic reticulum. Its subcellular location is the myofibril. The protein localises to the sarcomere. Its function is as follows. Acts as an adapter for the myotubularin phosphatase mtm1 to regulate mtm1 protein stability and possibly its intracellular location. By stabilizing mtm1 protein levels, required for skeletal muscle maintenance but not for myogenesis. In skeletal muscle cells, does not regulate mtm1 subcellular localization. In Danio rerio (Zebrafish), this protein is Myotubularin-related protein 12 (mtmr12).